Here is a 539-residue protein sequence, read N- to C-terminus: Membrane protein insertase YidC (539 aa).

A helical membrane pass occupies residues 7–27; the sequence is IIAIALSFVVLVGWSYLADHM. The interval 32–64 is disordered; that stretch reads QPAPQAQQEETAPSASQAAPQSASQAAAPAPRA. The next 3 helical transmembrane spans lie at 347–367, 418–438, and 498–518; these read YVGN…LVFW, GGCL…QALL, and IMMF…SGLV.

This sequence belongs to the OXA1/ALB3/YidC family. Type 1 subfamily. Interacts with the Sec translocase complex via SecD. Specifically interacts with transmembrane segments of nascent integral membrane proteins during membrane integration.

The protein localises to the cell inner membrane. Functionally, required for the insertion and/or proper folding and/or complex formation of integral membrane proteins into the membrane. Involved in integration of membrane proteins that insert both dependently and independently of the Sec translocase complex, as well as at least some lipoproteins. Aids folding of multispanning membrane proteins. This Nitratidesulfovibrio vulgaris (strain DSM 19637 / Miyazaki F) (Desulfovibrio vulgaris) protein is Membrane protein insertase YidC.